The chain runs to 220 residues: MTSGEVKTSLKNAYSSAKRLSLKMEEEGEEEDYCTPGAFELERLFWKGSPQYTHVNEVWPKLYIGDEATALDRYRLQKAGFTHVLNAAHGRWNVDTGPDYYRDMDIQYHGVEADDLPTFDLSVFFYPAAAFIDRALRDDHSKILVHCVMGRSRSATLVLAYLMIHKDMTLVDAIQQVAKNRCVLPNRGFLKQLRELDKQLVQQRRQAQRQDGEEEDGREL.

A Tyrosine-protein phosphatase domain is found at 54–202 (HVNEVWPKLY…LRELDKQLVQ (149 aa)). 146–153 (HCVMGRSR) contacts substrate. Cysteine 147 serves as the catalytic Phosphocysteine intermediate.

This sequence belongs to the protein-tyrosine phosphatase family. Non-receptor class dual specificity subfamily. As to quaternary structure, homodimer. Interacts with PRKAA2.

The protein localises to the cytoplasm. It localises to the nucleus. It catalyses the reaction O-phospho-L-tyrosyl-[protein] + H2O = L-tyrosyl-[protein] + phosphate. It carries out the reaction O-phospho-L-seryl-[protein] + H2O = L-seryl-[protein] + phosphate. The enzyme catalyses O-phospho-L-threonyl-[protein] + H2O = L-threonyl-[protein] + phosphate. In terms of biological role, dual specificity phosphatase able to dephosphorylate phosphotyrosine, phosphoserine and phosphothreonine residues within the same substrate, with a preference for phosphotyrosine as a substrate. Involved in the modulation of intracellular signaling cascades. In skeletal muscle regulates systemic glucose homeostasis by activating, AMPK, an energy sensor protein kinase. Affects MAP kinase signaling though modulation of the ERK1/2 cascade in skeletal muscle promoting muscle cell differentiation, development and atrophy. In Pan troglodytes (Chimpanzee), this protein is Dual specificity phosphatase 29 (DUSP29).